A 96-amino-acid chain; its full sequence is uncharacterized protein (96 aa).

This is an uncharacterized protein from Enterobacteria phage T4 (Bacteriophage T4).